The primary structure comprises 367 residues: Peroxisome biogenesis protein 16 (367 aa).

Residues 135–173 (GGETPNEEKDSNQSESQNRAGNSGRNLGPHGLGNQNHHN) are disordered. The segment covering 147–159 (QSESQNRAGNSGR) has biased composition (polar residues). 2 helical membrane passes run 237 to 257 (ALFA…VLFI) and 264 to 284 (SWIP…LLAN).

Belongs to the peroxin-16 family. In terms of assembly, interacts with APEM9 (via both N- and C-terminus). In terms of processing, the detection of an additional immunorelated polypeptide of 52 kDa suggests a post-translational modification of PEX16. In terms of tissue distribution, expressed in roots, siliques, seeds, cotyledons, leaves and flowers. Low expression in leaves and roots.

The protein localises to the peroxisome membrane. The protein resides in the endoplasmic reticulum membrane. Involved in the formation of peroxisomes, lipid bodies and protein bodies. The sequence is that of Peroxisome biogenesis protein 16 from Arabidopsis thaliana (Mouse-ear cress).